A 371-amino-acid polypeptide reads, in one-letter code: Opsin, ultraviolet-sensitive (371 aa).

The Extracellular segment spans residues 1-52 (MSNDSIHWEARYLPAGPPRLLGWNVPAEELIHIPEHWLVYPEPNPSLHYLLA). Asparagine 3 carries N-linked (GlcNAc...) asparagine glycosylation. Residues 53-73 (LLYILFTFLALLGNGLVIWIF) form a helical membrane-spanning segment. Residues 74 to 84 (CAAKSLRTPSN) lie on the Cytoplasmic side of the membrane. Residues 85–105 (MFVVNLAICDFFMMIKTPIFI) form a helical membrane-spanning segment. Over 106–121 (YNSFNTGFALGNLGCQ) the chain is Extracellular. A disulfide bond links cysteine 120 and cysteine 197. The chain crosses the membrane as a helical span at residues 122–142 (IFAVIGSLTGIGAAITNAAIA). The Cytoplasmic segment spans residues 143 to 161 (YDRYSTIARPLDGKLSRGQ). Residues 162-182 (VILFIVLIWTYTIPWALMPVM) form a helical membrane-spanning segment. Residues 183–209 (GVWGRFVPEGFLTSCSFDYLTDTNEIR) lie on the Extracellular side of the membrane. Residues 210-230 (IFVATIFTFSYCIPMILIIYY) form a helical membrane-spanning segment. The Cytoplasmic portion of the chain corresponds to 231 to 278 (YSQIVSHVVNHEKALREQAKKMNVDSLRSNANTSSQSAEIRIAKAAIT). A helical transmembrane segment spans residues 279-299 (ICFLYVLSWTPYGVMSMIGAF). Residues 300 to 302 (GNK) are Extracellular-facing. Residues 303–323 (ALLTPGVTMIPACTCKAVACL) form a helical membrane-spanning segment. An N6-(retinylidene)lysine modification is found at lysine 318. Over 324–371 (DPYVYAISHPKYRLELQKRLPWLELQEKPISDSTSTTTETVNTPPASS) the chain is Cytoplasmic.

The protein belongs to the G-protein coupled receptor 1 family. Opsin subfamily. Post-translationally, phosphorylated on some or all of the serine and threonine residues present in the C-terminal region. As to expression, expressed in the dorsal region of the retina.

It is found in the membrane. Visual pigments are the light-absorbing molecules that mediate vision. They consist of an apoprotein, opsin, covalently linked to 11-cis-retinal. The chain is Opsin, ultraviolet-sensitive (UVOP) from Apis mellifera (Honeybee).